Reading from the N-terminus, the 450-residue chain is MRQILHIQGGQCGNQIGAKFWEVVCAEHGIDPTGRYTGDSDLQLERIDVYYNEASGGRFVPRAVLMDLEPGTMDSIRSGPYGQIFRPDNFVFGQSGAGNNWAKGHYTEGAELIDSVLDVVRKEAENCDCLQGFQVCHSLGGGTGSGMGTLLISKIREEYPDRMMLTFSVFPSPKVSDTVVEPYNATLSVHQLVENADEVMVLDNEALYDICFRILKLSNPSFGDLNHLISATMSGVTCCLRFPGQLNSDLRKLAVNLIPFPRLHFFMVGFAPLTSRGSQQYRTLSVPELTQQMWDAKNMMCAADPRHGRYLTASAMFRGKMSTKEVDEQMMNVQNKNSSYFVEWIPNNVKSTVCDIPPTGLKMASTFIGNSTSIQEMFRRVSEQFTAMFRRKAFLHWYTGEGMDEMEFTEAESNMNDLVAEYQQYQDATADEDEYGEEEGDEEEYGQHDI.

Positions 11, 69, 138, 142, 143, 144, 204, and 226 each coordinate GTP. E69 lines the Mg(2+) pocket. The disordered stretch occupies residues 426–450 (QDATADEDEYGEEEGDEEEYGQHDI). Over residues 429-444 (TADEDEYGEEEGDEEE) the composition is skewed to acidic residues.

This sequence belongs to the tubulin family. Dimer of alpha and beta chains. A typical microtubule is a hollow water-filled tube with an outer diameter of 25 nm and an inner diameter of 15 nM. Alpha-beta heterodimers associate head-to-tail to form protofilaments running lengthwise along the microtubule wall with the beta-tubulin subunit facing the microtubule plus end conferring a structural polarity. Microtubules usually have 13 protofilaments but different protofilament numbers can be found in some organisms and specialized cells. It depends on Mg(2+) as a cofactor.

The protein resides in the cytoplasm. The protein localises to the cytoskeleton. Functionally, tubulin is the major constituent of microtubules, a cylinder consisting of laterally associated linear protofilaments composed of alpha- and beta-tubulin heterodimers. Microtubules grow by the addition of GTP-tubulin dimers to the microtubule end, where a stabilizing cap forms. Below the cap, tubulin dimers are in GDP-bound state, owing to GTPase activity of alpha-tubulin. This chain is Tubulin beta-1 chain (TUBB1), found in Pisum sativum (Garden pea).